The primary structure comprises 391 residues: Phosphoglycerate kinase (391 aa).

Substrate contacts are provided by residues 21–23, R36, 59–62, R113, and R146; these read DLN and HLGR. Residues K197, E319, and 345 to 348 each bind ATP; that span reads GGDT.

This sequence belongs to the phosphoglycerate kinase family. Monomer.

The protein resides in the cytoplasm. The enzyme catalyses (2R)-3-phosphoglycerate + ATP = (2R)-3-phospho-glyceroyl phosphate + ADP. The protein operates within carbohydrate degradation; glycolysis; pyruvate from D-glyceraldehyde 3-phosphate: step 2/5. In Pseudoalteromonas atlantica (strain T6c / ATCC BAA-1087), this protein is Phosphoglycerate kinase.